Consider the following 1104-residue polypeptide: Collagenase ColA (1104 aa).

The signal sequence occupies residues 1-39 (MKKNLKRGELTKLKLVERWSATFTLAAFILFNSSFKVLA). Residues 40–86 (ADKKVENSNNGQITREINADQISKTELNNEVATDNNRPLGPSIAPSR) constitute a propeptide that is removed on maturation. The segment at 87 to 761 (ARNNKIYTFD…YVYDVVFHGM (675 aa)) is S1 metalloprotease domain. Positions 93–367 (YTFDELNRMN…AANDLDLNFG (275 aa)) are activator domain. Positions 377–646 (DFNKIKADAR…MDSLLNNIDN (270 aa)) are catalytic subdomain. E477 contacts Ca(2+). Position 502 (H502) interacts with Zn(2+). Residue E503 is part of the active site. Position 506 (H506) interacts with Zn(2+). Positions 510, 514, and 516 each coordinate Ca(2+). Position 534 (E534) interacts with Zn(2+). Residues 654–767 (DEYVNGHEAK…FHGMNTDTNT (114 aa)) are helper subdomain. The tract at residues 762–860 (NTDTNTDVHV…KKIKVVEDKP (99 aa)) is S2 domain. Residues N772, K773, D800, D802, D841, E866, E868, N870, D894, D897, E993, E995, N997, L1016, D1020, K1022, and D1023 each coordinate Ca(2+). The region spanning 774 to 862 (EPKAVIKSDS…IKVVEDKPVE (89 aa)) is the PKD domain. The tract at residues 865-979 (NESEPNNDFE…TYTVNVKGNL (115 aa)) is S3a collagen-binding domain. The interval 992-1104 (KEVENNNDFD…GNYIVNLQNK (113 aa)) is S3b collagen-binding domain.

Belongs to the peptidase M9B family. Collagenase subfamily. It depends on Ca(2+) as a cofactor. Requires Zn(2+) as cofactor.

Its subcellular location is the secreted. The catalysed reaction is Digestion of native collagen in the triple helical region at Xaa-|-Gly bonds. With synthetic peptides, a preference is shown for Gly at P3 and P1', Pro and Ala at P2 and P2', and hydroxyproline, Ala or Arg at P3'.. Its function is as follows. Clostridial collagenases are among the most efficient degraders of eukaryotic collagen known; saprophytes use collagen as a carbon source while pathogens additionally digest collagen to aid in host colonization. Has both tripeptidylcarboxypeptidase on Gly-X-Y and endopeptidase activities; the endopeptidase cuts within the triple helix region of collagen while tripeptidylcarboxypeptidase successively digests the exposed ends, thus clostridial collagenases can digest large sections of collagen. This is Collagenase ColA (colA) from Clostridium perfringens (strain 13 / Type A).